Reading from the N-terminus, the 190-residue chain is MKTGKELKPGTVIRLENDPWLVQKAEFTKSGRNSAIMKTKLKNLLTGYKTEIVYSADDKLDDVILDRKEATLSFISGDTYTFMDTTDYTMYELNAEDIEAVLPFIEEGMEDVCEAIFFEERLVSVELPTTIVRKVAYTEGSARGDTSGKVMKPAKLSNGTELQVADFIEIDDLIEIDTREGGSYKGRAKK.

This sequence belongs to the elongation factor P family.

It localises to the cytoplasm. It functions in the pathway protein biosynthesis; polypeptide chain elongation. Its function is as follows. Involved in peptide bond synthesis. Stimulates efficient translation and peptide-bond synthesis on native or reconstituted 70S ribosomes in vitro. Probably functions indirectly by altering the affinity of the ribosome for aminoacyl-tRNA, thus increasing their reactivity as acceptors for peptidyl transferase. The polypeptide is Elongation factor P (Pseudomonas fluorescens (strain SBW25)).